Here is a 224-residue protein sequence, read N- to C-terminus: UPF0758 protein lmo1549 (224 aa).

Positions 102 to 224 (VVRCPEDAVK…YISLKEKGYF (123 aa)) constitute an MPN domain. H173, H175, and D186 together coordinate Zn(2+). A JAMM motif motif is present at residues 173–186 (HNHPSGDPTPSSED).

The protein belongs to the UPF0758 family.

The sequence is that of UPF0758 protein lmo1549 from Listeria monocytogenes serovar 1/2a (strain ATCC BAA-679 / EGD-e).